The following is a 234-amino-acid chain: Large ribosomal subunit protein uL1 (234 aa).

This sequence belongs to the universal ribosomal protein uL1 family. In terms of assembly, part of the 50S ribosomal subunit.

In terms of biological role, binds directly to 23S rRNA. The L1 stalk is quite mobile in the ribosome, and is involved in E site tRNA release. Protein L1 is also a translational repressor protein, it controls the translation of the L11 operon by binding to its mRNA. This chain is Large ribosomal subunit protein uL1, found in Helicobacter acinonychis (strain Sheeba).